The chain runs to 470 residues: Glutamate--tRNA ligase 1 (470 aa).

The short motif at 15 to 25 (PSPTGTMHIGT) is the 'HIGH' region element. The 'KMSKS' region signature appears at 241 to 245 (KLSKR). ATP is bound at residue Lys244.

This sequence belongs to the class-I aminoacyl-tRNA synthetase family. Glutamate--tRNA ligase type 1 subfamily. In terms of assembly, monomer.

It is found in the cytoplasm. The catalysed reaction is tRNA(Glu) + L-glutamate + ATP = L-glutamyl-tRNA(Glu) + AMP + diphosphate. In terms of biological role, catalyzes the attachment of glutamate to tRNA(Glu) in a two-step reaction: glutamate is first activated by ATP to form Glu-AMP and then transferred to the acceptor end of tRNA(Glu). The sequence is that of Glutamate--tRNA ligase 1 from Jannaschia sp. (strain CCS1).